The following is a 505-amino-acid chain: Protein nucleotidyltransferase YdiU (505 aa).

Positions 102, 104, 105, 125, 137, 138, 188, and 195 each coordinate ATP. D264 (proton acceptor) is an active-site residue. Mg(2+) is bound by residues N265 and D274. D274 is an ATP binding site.

This sequence belongs to the SELO family. It depends on Mg(2+) as a cofactor. Mn(2+) serves as cofactor.

It carries out the reaction L-seryl-[protein] + ATP = 3-O-(5'-adenylyl)-L-seryl-[protein] + diphosphate. It catalyses the reaction L-threonyl-[protein] + ATP = 3-O-(5'-adenylyl)-L-threonyl-[protein] + diphosphate. The catalysed reaction is L-tyrosyl-[protein] + ATP = O-(5'-adenylyl)-L-tyrosyl-[protein] + diphosphate. The enzyme catalyses L-histidyl-[protein] + UTP = N(tele)-(5'-uridylyl)-L-histidyl-[protein] + diphosphate. It carries out the reaction L-seryl-[protein] + UTP = O-(5'-uridylyl)-L-seryl-[protein] + diphosphate. It catalyses the reaction L-tyrosyl-[protein] + UTP = O-(5'-uridylyl)-L-tyrosyl-[protein] + diphosphate. Functionally, nucleotidyltransferase involved in the post-translational modification of proteins. It can catalyze the addition of adenosine monophosphate (AMP) or uridine monophosphate (UMP) to a protein, resulting in modifications known as AMPylation and UMPylation. In Nitrobacter winogradskyi (strain ATCC 25391 / DSM 10237 / CIP 104748 / NCIMB 11846 / Nb-255), this protein is Protein nucleotidyltransferase YdiU.